The sequence spans 210 residues: MSGLFITLEGPEGAGKSTNRDYLAARLREHGLDVVLTREPGGTPLAEKVRELLLTPSDEGMAADTELLLVFAARAQHLAQVIRPALARGAVVLCDRFTDATYAYQGGGRGLSVERIAVLEQFVQGDLRPDLTLVFDLPVEVGLARAAARGRLDRFEQEGQAFFEAVRQAYLQRAQGAPQRYSLLDAAQSLEAVQRDIDALLPGILERCRG.

10 to 17 contributes to the ATP binding site; that stretch reads GPEGAGKS.

Belongs to the thymidylate kinase family.

It catalyses the reaction dTMP + ATP = dTDP + ADP. In terms of biological role, phosphorylation of dTMP to form dTDP in both de novo and salvage pathways of dTTP synthesis. This is Thymidylate kinase from Pseudomonas putida (strain ATCC 700007 / DSM 6899 / JCM 31910 / BCRC 17059 / LMG 24140 / F1).